Here is a 487-residue protein sequence, read N- to C-terminus: Lysine--tRNA ligase (487 aa).

The Mg(2+) site is built by Glu398 and Glu405.

The protein belongs to the class-II aminoacyl-tRNA synthetase family. Homodimer. Mg(2+) is required as a cofactor.

Its subcellular location is the cytoplasm. The catalysed reaction is tRNA(Lys) + L-lysine + ATP = L-lysyl-tRNA(Lys) + AMP + diphosphate. This Mycoplasma mobile (strain ATCC 43663 / 163K / NCTC 11711) (Mesomycoplasma mobile) protein is Lysine--tRNA ligase.